A 154-amino-acid chain; its full sequence is Transcription antitermination protein NusB (154 aa).

The disordered stretch occupies residues 132–154; it reads KDKQSPQSTPLDDSDKDESDQTN. Positions 143–154 are enriched in acidic residues; that stretch reads DDSDKDESDQTN.

The protein belongs to the NusB family.

Its function is as follows. Involved in transcription antitermination. Required for transcription of ribosomal RNA (rRNA) genes. Binds specifically to the boxA antiterminator sequence of the ribosomal RNA (rrn) operons. The protein is Transcription antitermination protein NusB of Bifidobacterium animalis subsp. lactis (strain AD011).